The sequence spans 105 residues: MFVVVETGGKQYKLSVGSTVRVEKLQANVGDEVVLDKVLLVGKDDEVLIGQPYVEGAKVIAEVVKQDKYPKVIVFKFKRKKHYRRKYGHRQPYTQLSVKEIVLPQ.

It belongs to the bacterial ribosomal protein bL21 family. As to quaternary structure, part of the 50S ribosomal subunit. Contacts protein L20.

This protein binds to 23S rRNA in the presence of protein L20. The protein is Large ribosomal subunit protein bL21 of Dictyoglomus thermophilum (strain ATCC 35947 / DSM 3960 / H-6-12).